The primary structure comprises 529 residues: UDP-glycosyltransferase (529 aa).

N-linked (GlcNAc...) asparagine glycosylation is found at Asn70 and Asn420. Residues 504 to 524 (LDLYLVYIALFAVPVGAVRWI) form a helical membrane-spanning segment.

This sequence belongs to the glycosyltransferase 28 family.

It is found in the membrane. It carries out the reaction stromemycin aglycone + UDP-alpha-D-glucose = stromemycin + UDP + H(+). Its pathway is mycotoxin biosynthesis. UDP-glycosyltransferase; part of the gene cluster that mediates the biosynthesis of stromemycin, a depside C-glucoside with two unsaturated C9 side chains belonging to aromatic polyketide glycosides. Acts as the tailoring enzyme responsible for 3-C-glucosylation of bininalkenylresorcylic acid to yield stromemycin. In Talaromyces amestolkiae, this protein is UDP-glycosyltransferase.